The following is a 140-amino-acid chain: Non-specific lipid transfer protein GPI-anchored 33 (140 aa).

The signal sequence occupies residues 1 to 27 (MAYTNKVTISAAVATMMLFLAVTIVDA). 4 disulfide bridges follow: Cys40/Cys80, Cys52/Cys64, Cys65/Cys104, and Cys78/Cys112. N-linked (GlcNAc...) asparagine glycosylation is present at Asn91. Residue Gly115 is the site of GPI-anchor amidated glycine attachment. Residues 116-140 (DASGGSTNKIAASMVLLGLVASLFF) constitute a propeptide, removed in mature form.

This sequence belongs to the plant LTP family.

Its subcellular location is the cell membrane. In terms of biological role, probable lipid transfer protein. In Arabidopsis thaliana (Mouse-ear cress), this protein is Non-specific lipid transfer protein GPI-anchored 33.